The primary structure comprises 201 residues: MLEVLKTFAVLYVGLFAITNPVGAVPIFMGVVSHLAPDKRHEVAEKVSITVLVTLLTFALVGKWIFKFFGSSVDAFAIAGGILLFRMGMEMLSGKLSSVKIDEEDVTLEEVAVIPLAIPLISGPGAITTVMLYMTRESPPIVIATIIAIGISVYIILASGNKIIEKLGRVGIKVTTRMMGLILTSMAIQMIINGIKGAFGI.

6 consecutive transmembrane segments (helical) span residues 8–28 (FAVL…VPIF), 49–69 (ITVL…FKFF), 73–93 (VDAF…EMLS), 111–131 (VAVI…TTVM), 140–160 (PIVI…LASG), and 181–201 (LILT…AFGI).

This sequence belongs to the UPF0056 (MarC) family.

The protein localises to the cell membrane. The polypeptide is UPF0056 membrane protein PYRAB13050 (Pyrococcus abyssi (strain GE5 / Orsay)).